The following is a 557-amino-acid chain: Phosphoacetylglucosamine mutase (557 aa).

The active-site Phosphoserine intermediate is Ser-67. Mg(2+)-binding residues include Ser-67, Asp-298, Asp-300, and Asp-302. A Phosphoserine modification is found at Ser-67. Residues 395 to 397 (EAN), 522 to 526 (RASGT), and Arg-531 contribute to the substrate site.

Belongs to the phosphohexose mutase family. Mg(2+) serves as cofactor.

Its subcellular location is the cytoplasm. It localises to the nucleus. It catalyses the reaction N-acetyl-alpha-D-glucosamine 1-phosphate = N-acetyl-D-glucosamine 6-phosphate. It participates in nucleotide-sugar biosynthesis; UDP-N-acetyl-alpha-D-glucosamine biosynthesis; N-acetyl-alpha-D-glucosamine 1-phosphate from alpha-D-glucosamine 6-phosphate (route I): step 2/2. Its function is as follows. Catalyzes the conversion of GlcNAc-6-P into GlcNAc-1-P during the synthesis of uridine diphosphate/UDP-GlcNAc, which is a biosynthetic precursor of chitin and also supplies the amino sugars for N-linked oligosaccharides of glycoproteins. Also has phosphoglucomutase activity. The protein is Phosphoacetylglucosamine mutase of Saccharomyces cerevisiae (strain ATCC 204508 / S288c) (Baker's yeast).